The sequence spans 96 residues: Keratin-associated protein 12-3 (96 aa).

Tandem repeats lie at residues 10–14, 15–19, 24–28, 30–34, 35–39, 45–49, 50–54, 55–59, 60–64, 70–74, 75–79, 80–84, 85–89, and 90–94. Positions 10–94 are 14 X 5 AA approximate repeats; it reads CQPTCCIHSP…CRPISCSTPS (85 aa).

Belongs to the KRTAP type 12 family. As to quaternary structure, interacts with hair keratins. Restricted to a narrow region of the hair fiber cuticle, lying approximately 20 cell layers above the apex of the dermal papilla of the hair root; not detected in any other tissues.

In the hair cortex, hair keratin intermediate filaments are embedded in an interfilamentous matrix, consisting of hair keratin-associated proteins (KRTAP), which are essential for the formation of a rigid and resistant hair shaft through their extensive disulfide bond cross-linking with abundant cysteine residues of hair keratins. The matrix proteins include the high-sulfur and high-glycine-tyrosine keratins. This chain is Keratin-associated protein 12-3 (KRTAP12-3), found in Homo sapiens (Human).